The chain runs to 74 residues: uncharacterized protein (74 aa).

A helical membrane pass occupies residues 20–40 (IYSYTLLTLLVITLICYLIHI).

Belongs to the asfivirus KP93L family.

The protein resides in the host membrane. This is an uncharacterized protein from African swine fever virus (isolate Tick/South Africa/Pretoriuskop Pr4/1996) (ASFV).